The primary structure comprises 350 residues: tRNA dimethylallyltransferase (350 aa).

34-41 (GPTASGKT) serves as a coordination point for ATP. 36 to 41 (TASGKT) is a substrate binding site. Interaction with substrate tRNA regions lie at residues 63 to 66 (DSAL), 187 to 191 (QRIQR), and 274 to 279 (RCVGYR).

It belongs to the IPP transferase family. Monomer. Requires Mg(2+) as cofactor.

The catalysed reaction is adenosine(37) in tRNA + dimethylallyl diphosphate = N(6)-dimethylallyladenosine(37) in tRNA + diphosphate. Its function is as follows. Catalyzes the transfer of a dimethylallyl group onto the adenine at position 37 in tRNAs that read codons beginning with uridine, leading to the formation of N6-(dimethylallyl)adenosine (i(6)A). In Paracidovorax citrulli (strain AAC00-1) (Acidovorax citrulli), this protein is tRNA dimethylallyltransferase.